Reading from the N-terminus, the 292-residue chain is Acetylglutamate kinase (292 aa).

Substrate-binding positions include 64–65 (GG), Arg86, and Asn190.

The protein belongs to the acetylglutamate kinase family. ArgB subfamily.

The protein resides in the cytoplasm. The catalysed reaction is N-acetyl-L-glutamate + ATP = N-acetyl-L-glutamyl 5-phosphate + ADP. It participates in amino-acid biosynthesis; L-arginine biosynthesis; N(2)-acetyl-L-ornithine from L-glutamate: step 2/4. Its function is as follows. Catalyzes the ATP-dependent phosphorylation of N-acetyl-L-glutamate. The protein is Acetylglutamate kinase of Trichlorobacter lovleyi (strain ATCC BAA-1151 / DSM 17278 / SZ) (Geobacter lovleyi).